We begin with the raw amino-acid sequence, 215 residues long: Protein C' (215 aa).

The tract at residues 12-34 (MPSFLKKILKLRGRRQEDESRSR) is disordered. The segment at 15–22 (FLKKILKL) is involved in self-degradation and in host STAT1 degradation. Basic and acidic residues predominate over residues 25 to 35 (RRQEDESRSRM). Over residues 36-66 (LSDSSTQSYQVNQLTSEGTEAGSTIPSTPSK) the composition is skewed to polar residues.

It belongs to the respirovirus protein C family. In terms of assembly, the different isoforms interact (via C-terminus) with unphosphorylated and phosphorylated human STAT1 (via N-terminus), favoring the formation of parallel STAT1 homodimers. The different isoforms do not interact with host STAT2. C protein interacts with L protein; this interaction has an inhibitory effect on viral transcription and replication. In terms of processing, protein Y1 is produced not only by alternative initiation, but also by proteolytic cleavage of C'. Only alternative initiation is detected in vitro, whereas in vivo cleavage seems to be predominant.

The protein localises to the host cytoplasm. In terms of biological role, the different products prevent the establishment of cellular antiviral state by blocking the interferon-alpha/beta (IFN-alpha/beta) and IFN-gamma signaling pathways. They inhibit IFN-alpha/beta induced tyrosine phosphorylation of STAT1 and STAT2. Blocking the IFN-alpha/beta pathway requires binding to STAT1 in the cytoplasm. They inhibit IFN-gamma induced serine phosphorylation of STAT1. Block the IFN-gamma pathway by binding to and stabilizing the parallel form of the STAT1 dimer, further inducing high-molecular-weight complex formation and inhibition of transcription by IFN-gamma. May also have a role in preventing the cell to enter apoptosis. Modulate regulation of viral transcription and replication. Overexpression inhibits the viral RNA polymerase. The absence of all C', C and Y1 proteins leads to viral delayed growth. Plays an important role in virion particles release. Modulates virion shape. This Sendai virus (strain Ohita) (SeV) protein is Protein C' (P/V/C).